Consider the following 478-residue polypeptide: Aspartyl/glutamyl-tRNA(Asn/Gln) amidotransferase subunit B (478 aa).

It belongs to the GatB/GatE family. GatB subfamily. In terms of assembly, heterotrimer of A, B and C subunits.

It catalyses the reaction L-glutamyl-tRNA(Gln) + L-glutamine + ATP + H2O = L-glutaminyl-tRNA(Gln) + L-glutamate + ADP + phosphate + H(+). The catalysed reaction is L-aspartyl-tRNA(Asn) + L-glutamine + ATP + H2O = L-asparaginyl-tRNA(Asn) + L-glutamate + ADP + phosphate + 2 H(+). Its function is as follows. Allows the formation of correctly charged Asn-tRNA(Asn) or Gln-tRNA(Gln) through the transamidation of misacylated Asp-tRNA(Asn) or Glu-tRNA(Gln) in organisms which lack either or both of asparaginyl-tRNA or glutaminyl-tRNA synthetases. The reaction takes place in the presence of glutamine and ATP through an activated phospho-Asp-tRNA(Asn) or phospho-Glu-tRNA(Gln). The protein is Aspartyl/glutamyl-tRNA(Asn/Gln) amidotransferase subunit B of Pseudothermotoga lettingae (strain ATCC BAA-301 / DSM 14385 / NBRC 107922 / TMO) (Thermotoga lettingae).